The sequence spans 65 residues: Hainantoxin-X.3 (65 aa).

The first 20 residues, 1–20, serve as a signal peptide directing secretion; the sequence is MNMKILVLVAVLCLVVSTHA. Positions 21 to 37 are excised as a propeptide; the sequence is ERHSKTDMGDSPMIQER. Disulfide bonds link Cys-39-Cys-56, Cys-46-Cys-59, and Cys-55-Cys-64.

It belongs to the neurotoxin 36 family. 02 subfamily. Expressed by the venom gland.

The protein localises to the secreted. Functionally, reversibly blocks N-type calcium channels (Cav2.2/CACNA1B) in rat dorsal root ganglion cells. Elicits no toxic symptoms in either vertebrates or invertebrates during a period of 48 hours post-injection, when it was assayed in vivo by direct injection into mice and cockroaches. This Cyriopagopus hainanus (Chinese bird spider) protein is Hainantoxin-X.3.